We begin with the raw amino-acid sequence, 148 residues long: UPF0756 membrane protein NMA2160 (148 aa).

Helical transmembrane passes span 13–35, 50–70, 80–100, and 121–141; these read LILLGVVSNNNSITISATILLLM, HGLNLGIILLTIGVLSPLVSG, FLNFKMISAVFIGIFVAWLAG, and VIGVAFMGGIPVGPLIAAGIL.

It belongs to the UPF0756 family.

The protein localises to the cell membrane. The protein is UPF0756 membrane protein NMA2160 of Neisseria meningitidis serogroup A / serotype 4A (strain DSM 15465 / Z2491).